A 373-amino-acid chain; its full sequence is tRNA-specific 2-thiouridylase MnmA (373 aa).

Residues G12 to S19 and M38 contribute to the ATP site. The interaction with target base in tRNA stretch occupies residues N98–D100. C103 (nucleophile) is an active-site residue. C103 and C200 are joined by a disulfide. Position 127 (G127) interacts with ATP. The tract at residues K150–Q152 is interaction with tRNA. The active-site Cysteine persulfide intermediate is the C200. Positions R312 to Y313 are interaction with tRNA.

This sequence belongs to the MnmA/TRMU family.

It is found in the cytoplasm. The enzyme catalyses S-sulfanyl-L-cysteinyl-[protein] + uridine(34) in tRNA + AH2 + ATP = 2-thiouridine(34) in tRNA + L-cysteinyl-[protein] + A + AMP + diphosphate + H(+). Catalyzes the 2-thiolation of uridine at the wobble position (U34) of tRNA, leading to the formation of s(2)U34. The protein is tRNA-specific 2-thiouridylase MnmA of Streptococcus pyogenes serotype M18 (strain MGAS8232).